Consider the following 308-residue polypeptide: Acetyl-coenzyme A carboxylase carboxyl transferase subunit beta 1 (308 aa).

In terms of domain architecture, CoA carboxyltransferase N-terminal spans 25 to 294 (VWTKCTSCEQ…PMVVSVNESP (270 aa)). Residues Cys-29, Cys-32, Cys-48, and Cys-51 each coordinate Zn(2+). The segment at 29-51 (CTSCEQVLYHAELERNLEVCPKC) adopts a C4-type zinc-finger fold. Residues 289–308 (SVNESPNEEPYSVPEADEKG) form a disordered region.

This sequence belongs to the AccD/PCCB family. Acetyl-CoA carboxylase is a heterohexamer composed of biotin carboxyl carrier protein (AccB), biotin carboxylase (AccC) and two subunits each of ACCase subunit alpha (AccA) and ACCase subunit beta (AccD). Requires Zn(2+) as cofactor.

It localises to the cytoplasm. It carries out the reaction N(6)-carboxybiotinyl-L-lysyl-[protein] + acetyl-CoA = N(6)-biotinyl-L-lysyl-[protein] + malonyl-CoA. It participates in lipid metabolism; malonyl-CoA biosynthesis; malonyl-CoA from acetyl-CoA: step 1/1. Component of the acetyl coenzyme A carboxylase (ACC) complex. Biotin carboxylase (BC) catalyzes the carboxylation of biotin on its carrier protein (BCCP) and then the CO(2) group is transferred by the transcarboxylase to acetyl-CoA to form malonyl-CoA. This Vibrio campbellii (strain ATCC BAA-1116) protein is Acetyl-coenzyme A carboxylase carboxyl transferase subunit beta 1.